We begin with the raw amino-acid sequence, 288 residues long: Ankyrin repeat and SOCS box protein 8 (288 aa).

At Ser17 the chain carries Phosphoserine. ANK repeat units lie at residues 52 to 81 (GTLK…EVNA), 85 to 113 (YNRT…NPNA), 117 to 146 (NRDT…SVNA), and 150 to 179 (NNDT…EVRV). The SOCS box domain maps to 235–288 (QLCEKLTVLCSAPGTLKTLARYAVRRSLGLQYLPDAVKGLPLPVSLKDYLLLLE).

This sequence belongs to the ankyrin SOCS box (ASB) family. Interacts with TBK1; this interaction promotes TBK1 proteasomal degradation. In terms of processing, phosphorylated by TBK1.

Its subcellular location is the cytoplasm. Its pathway is protein modification; protein ubiquitination. May be a substrate-recognition component of a SCF-like ECS (Elongin-Cullin-SOCS-box protein) E3 ubiquitin-protein ligase complex which mediates the ubiquitination and subsequent proteasomal degradation of target proteins. Inhibits IFN-beta production through the IRF3 signaling pathway by targeting TBK1 via 'Lys-48'-linked ubiquitination, leading to its proteasomal degradation. In Mus musculus (Mouse), this protein is Ankyrin repeat and SOCS box protein 8 (Asb8).